Consider the following 206-residue polypeptide: Urease accessory protein UreE (206 aa).

The tract at residues P136–K206 is disordered. Composition is skewed to basic and acidic residues over residues Q148–E169 and H177–G191. The segment covering H192–K206 has biased composition (basic residues).

The protein belongs to the UreE family.

The protein resides in the cytoplasm. In terms of biological role, involved in urease metallocenter assembly. Binds nickel. Probably functions as a nickel donor during metallocenter assembly. The chain is Urease accessory protein UreE from Bradyrhizobium sp. (strain BTAi1 / ATCC BAA-1182).